We begin with the raw amino-acid sequence, 254 residues long: Sec-independent protein translocase protein TatC (254 aa).

Helical transmembrane passes span 40–60 (IFLS…FVKP), 82–104 (FFFV…FILY), 125–145 (VVLG…YALI), 172–192 (FVLL…IQVV), 210–230 (FVIL…DPLT), and 233–253 (LLAG…RLLG).

The protein belongs to the TatC family. Forms a complex with TatA.

Its subcellular location is the cell inner membrane. Its function is as follows. Part of the twin-arginine translocation (Tat) system that transports large folded proteins containing a characteristic twin-arginine motif in their signal peptide across membranes. This Synechocystis sp. (strain ATCC 27184 / PCC 6803 / Kazusa) protein is Sec-independent protein translocase protein TatC.